Consider the following 268-residue polypeptide: Tryptophan synthase alpha chain (268 aa).

Catalysis depends on proton acceptor residues E49 and D60.

Belongs to the TrpA family. As to quaternary structure, tetramer of two alpha and two beta chains.

The catalysed reaction is (1S,2R)-1-C-(indol-3-yl)glycerol 3-phosphate + L-serine = D-glyceraldehyde 3-phosphate + L-tryptophan + H2O. It functions in the pathway amino-acid biosynthesis; L-tryptophan biosynthesis; L-tryptophan from chorismate: step 5/5. Functionally, the alpha subunit is responsible for the aldol cleavage of indoleglycerol phosphate to indole and glyceraldehyde 3-phosphate. This chain is Tryptophan synthase alpha chain, found in Vibrio vulnificus (strain YJ016).